Reading from the N-terminus, the 682-residue chain is Tail-specific protease (682 aa).

The signal sequence occupies residues 1-22 (MNTFFRLTALAGLLALAGQSFA). The PDZ domain occupies 238–322 (NTEMSLSLEG…SKVRLEILPA (85 aa)). Residues Ser-452, Asp-463, and Lys-477 each act as charge relay system in the active site.

The protein belongs to the peptidase S41A family.

Its subcellular location is the cell inner membrane. The catalysed reaction is The enzyme shows specific recognition of a C-terminal tripeptide, Xaa-Yaa-Zaa, in which Xaa is preferably Ala or Leu, Yaa is preferably Ala or Tyr, and Zaa is preferably Ala, but then cleaves at a variable distance from the C-terminus. A typical cleavage is -Ala-Ala-|-Arg-Ala-Ala-Lys-Glu-Asn-Tyr-Ala-Leu-Ala-Ala.. Functionally, involved in the cleavage of a C-terminal peptide of 11 residues from the precursor form of penicillin-binding protein 3 (PBP3). May be involved in protection of the bacterium from thermal and osmotic stresses. The polypeptide is Tail-specific protease (prc) (Salmonella typhimurium (strain LT2 / SGSC1412 / ATCC 700720)).